Here is a 792-residue protein sequence, read N- to C-terminus: Starch synthase 2, chloroplastic/amyloplastic (792 aa).

The transit peptide at 1–55 (MASVAESSFPLLCQIKTQRRINSSTLRHSRVSYHDLPSGSLSFRSRSFVLGHRCK) directs the protein to the chloroplast. The segment at 105–295 (IKESTPDLDD…GKDEEKPPPL (191 aa)) is disordered. Polar residues predominate over residues 145 to 156 (GSVSPSTYGKSS). The segment covering 179–192 (SSASVISSSPVTSP) has biased composition (low complexity). Residues 221 to 233 (SVMTSPEKTSDPV) show a composition bias toward polar residues. Residues 266 to 275 (KTEKYVEKTP) show a composition bias toward basic and acidic residues. Lysine 315 serves as a coordination point for ADP-alpha-D-glucose.

Belongs to the glycosyltransferase 1 family. Bacterial/plant glycogen synthase subfamily. In terms of tissue distribution, expressed in roots, leaves and flowers.

The protein localises to the plastid. Its subcellular location is the chloroplast. The protein resides in the amyloplast. It carries out the reaction [(1-&gt;4)-alpha-D-glucosyl](n) + ADP-alpha-D-glucose = [(1-&gt;4)-alpha-D-glucosyl](n+1) + ADP + H(+). It participates in glycan biosynthesis; starch biosynthesis. Functionally, involved in the synthesis of glycan chains within amylopectin in leaves. Is required to produce chains with a degree of polymerization of 12 to 25 (DP12-DP25). In Arabidopsis thaliana (Mouse-ear cress), this protein is Starch synthase 2, chloroplastic/amyloplastic (SS2).